Reading from the N-terminus, the 72-residue chain is Translation initiation factor IF-1 (72 aa).

The S1-like domain occupies methionine 1–lysine 72.

Belongs to the IF-1 family. As to quaternary structure, component of the 30S ribosomal translation pre-initiation complex which assembles on the 30S ribosome in the order IF-2 and IF-3, IF-1 and N-formylmethionyl-tRNA(fMet); mRNA recruitment can occur at any time during PIC assembly.

It is found in the cytoplasm. One of the essential components for the initiation of protein synthesis. Stabilizes the binding of IF-2 and IF-3 on the 30S subunit to which N-formylmethionyl-tRNA(fMet) subsequently binds. Helps modulate mRNA selection, yielding the 30S pre-initiation complex (PIC). Upon addition of the 50S ribosomal subunit IF-1, IF-2 and IF-3 are released leaving the mature 70S translation initiation complex. The sequence is that of Translation initiation factor IF-1 from Clostridium botulinum (strain ATCC 19397 / Type A).